Here is a 350-residue protein sequence, read N- to C-terminus: Uroporphyrinogen decarboxylase (350 aa).

Residues 27-31, Phe46, Asp76, Tyr152, Ser207, and His321 contribute to the substrate site; that span reads RQAGR.

This sequence belongs to the uroporphyrinogen decarboxylase family. As to quaternary structure, homodimer.

The protein resides in the cytoplasm. It catalyses the reaction uroporphyrinogen III + 4 H(+) = coproporphyrinogen III + 4 CO2. The protein operates within porphyrin-containing compound metabolism; protoporphyrin-IX biosynthesis; coproporphyrinogen-III from 5-aminolevulinate: step 4/4. In terms of biological role, catalyzes the decarboxylation of four acetate groups of uroporphyrinogen-III to yield coproporphyrinogen-III. In Listeria innocua serovar 6a (strain ATCC BAA-680 / CLIP 11262), this protein is Uroporphyrinogen decarboxylase.